Here is a 256-residue protein sequence, read N- to C-terminus: Pimeloyl-[acyl-carrier protein] methyl ester esterase (256 aa).

Residues 15 to 242 enclose the AB hydrolase-1 domain; that stretch reads HLVLLHGWGL…AAHAPFISHP (228 aa). Substrate-binding positions include W22, 82 to 83, and 143 to 147; these read SL and FLALQ. S82 serves as the catalytic Nucleophile. Residues D207 and H235 contribute to the active site. Residue H235 participates in substrate binding.

This sequence belongs to the AB hydrolase superfamily. Carboxylesterase BioH family. As to quaternary structure, monomer.

It is found in the cytoplasm. It catalyses the reaction 6-carboxyhexanoyl-[ACP] methyl ester + H2O = 6-carboxyhexanoyl-[ACP] + methanol + H(+). The protein operates within cofactor biosynthesis; biotin biosynthesis. In terms of biological role, the physiological role of BioH is to remove the methyl group introduced by BioC when the pimeloyl moiety is complete. It allows to synthesize pimeloyl-ACP via the fatty acid synthetic pathway through the hydrolysis of the ester bonds of pimeloyl-ACP esters. This is Pimeloyl-[acyl-carrier protein] methyl ester esterase from Escherichia coli O6:K15:H31 (strain 536 / UPEC).